A 90-amino-acid chain; its full sequence is MSRTVHCVKLDHEAEGLDFPPYPGELGKRLYEQVSKEAWQMWMKHQTILINEYRLTLVDPKARQFLEQEMEKFFFGEGSTPPQEYTPPEQ.

This sequence belongs to the Fe(2+)-trafficking protein family.

Functionally, could be a mediator in iron transactions between iron acquisition and iron-requiring processes, such as synthesis and/or repair of Fe-S clusters in biosynthetic enzymes. The polypeptide is Probable Fe(2+)-trafficking protein (Nitrosococcus oceani (strain ATCC 19707 / BCRC 17464 / JCM 30415 / NCIMB 11848 / C-107)).